The chain runs to 154 residues: Deoxyuridine 5'-triphosphate nucleotidohydrolase (154 aa).

Substrate contacts are provided by residues 70–72 (RSG), Asn-83, 87–89 (LID), and Met-97.

This sequence belongs to the dUTPase family. The cofactor is Mg(2+).

It carries out the reaction dUTP + H2O = dUMP + diphosphate + H(+). The protein operates within pyrimidine metabolism; dUMP biosynthesis; dUMP from dCTP (dUTP route): step 2/2. This enzyme is involved in nucleotide metabolism: it produces dUMP, the immediate precursor of thymidine nucleotides and it decreases the intracellular concentration of dUTP so that uracil cannot be incorporated into DNA. The sequence is that of Deoxyuridine 5'-triphosphate nucleotidohydrolase from Buchnera aphidicola subsp. Acyrthosiphon pisum (strain 5A).